Here is a 760-residue protein sequence, read N- to C-terminus: Probable myosin-binding protein 4 (760 aa).

The helical transmembrane segment at 26-46 (WFLILLMFIDALLSYLLVWFA) threads the bilayer. 4 disordered regions span residues 161-189 (SRGR…SLKK), 247-273 (SEKR…QPVL), 292-311 (SMLG…VKAK), and 348-595 (EAEV…KHSA). Residues 352–366 (SGSSSPSGGEFLSPS) show a composition bias toward low complexity. The span at 371–383 (ASREIRIQEHDDS) shows a compositional bias: basic and acidic residues. The span at 385-394 (DFSQNITSSA) shows a compositional bias: polar residues. Residues 388–416 (QNITSSAMEIEEFEAAIEQKESDHMDVSG) adopt a coiled-coil conformation. Residues 404 to 413 (IEQKESDHMD) are compositionally biased toward basic and acidic residues. Acidic residues-rich tracts occupy residues 446–458 (LEQE…ESEV) and 517–526 (EEDVDNEESE). Basic and acidic residues-rich tracts occupy residues 537-550 (VKEE…HGDH) and 562-580 (SKEE…KITE). Positions 611-709 (SLVEVLKQQL…DLEMELEYYR (99 aa)) constitute a GTD-binding domain. The segment at 725–760 (GILGNTEETNVTSPTDETSIKDSTDTKLTGSPSAEN) is disordered. Polar residues-rich tracts occupy residues 730-741 (TEETNVTSPTDE) and 750-760 (TKLTGSPSAEN).

The protein resides in the endomembrane system. Its function is as follows. Membrane-anchored myosin receptors that define a distinct, plant-specific transport vesicle compartment. The polypeptide is Probable myosin-binding protein 4 (Arabidopsis thaliana (Mouse-ear cress)).